The primary structure comprises 210 residues: Protein GrpE (210 aa).

Belongs to the GrpE family. As to quaternary structure, homodimer.

It localises to the cytoplasm. Its function is as follows. Participates actively in the response to hyperosmotic and heat shock by preventing the aggregation of stress-denatured proteins, in association with DnaK and GrpE. It is the nucleotide exchange factor for DnaK and may function as a thermosensor. Unfolded proteins bind initially to DnaJ; upon interaction with the DnaJ-bound protein, DnaK hydrolyzes its bound ATP, resulting in the formation of a stable complex. GrpE releases ADP from DnaK; ATP binding to DnaK triggers the release of the substrate protein, thus completing the reaction cycle. Several rounds of ATP-dependent interactions between DnaJ, DnaK and GrpE are required for fully efficient folding. The sequence is that of Protein GrpE from Rhizobium leguminosarum bv. trifolii (strain WSM2304).